The chain runs to 538 residues: Phosphoenolpyruvate carboxykinase (ATP) (538 aa).

Arginine 64, tyrosine 205, and lysine 211 together coordinate substrate. ATP is bound by residues lysine 211, histidine 230, and 246–254 (GLSGTGKTT). Lysine 211 and histidine 230 together coordinate Mn(2+). Mn(2+) is bound at residue aspartate 267. ATP contacts are provided by residues glutamate 295, arginine 331, 447-448 (RI), and threonine 453. Substrate is bound at residue arginine 331.

The protein belongs to the phosphoenolpyruvate carboxykinase (ATP) family. Monomer. It depends on Mn(2+) as a cofactor.

It localises to the cytoplasm. It catalyses the reaction oxaloacetate + ATP = phosphoenolpyruvate + ADP + CO2. It functions in the pathway carbohydrate biosynthesis; gluconeogenesis. In terms of biological role, involved in the gluconeogenesis. Catalyzes the conversion of oxaloacetate (OAA) to phosphoenolpyruvate (PEP) through direct phosphoryl transfer between the nucleoside triphosphate and OAA. The polypeptide is Phosphoenolpyruvate carboxykinase (ATP) (Pasteurella multocida (strain Pm70)).